A 416-amino-acid polypeptide reads, in one-letter code: Imidazolonepropionase (416 aa).

Fe(3+)-binding residues include histidine 78 and histidine 80. Zn(2+) is bound by residues histidine 78 and histidine 80. Residues arginine 87, tyrosine 150, and histidine 183 each contribute to the 4-imidazolone-5-propanoate site. Position 150 (tyrosine 150) interacts with N-formimidoyl-L-glutamate. Position 248 (histidine 248) interacts with Fe(3+). Residue histidine 248 coordinates Zn(2+). Glutamine 251 contacts 4-imidazolone-5-propanoate. Residue aspartate 323 coordinates Fe(3+). Aspartate 323 contributes to the Zn(2+) binding site. Positions 325 and 327 each coordinate N-formimidoyl-L-glutamate. Threonine 328 is a 4-imidazolone-5-propanoate binding site.

This sequence belongs to the metallo-dependent hydrolases superfamily. HutI family. It depends on Zn(2+) as a cofactor. The cofactor is Fe(3+).

Its subcellular location is the cytoplasm. It carries out the reaction 4-imidazolone-5-propanoate + H2O = N-formimidoyl-L-glutamate. Its pathway is amino-acid degradation; L-histidine degradation into L-glutamate; N-formimidoyl-L-glutamate from L-histidine: step 3/3. Functionally, catalyzes the hydrolytic cleavage of the carbon-nitrogen bond in imidazolone-5-propanoate to yield N-formimidoyl-L-glutamate. It is the third step in the universal histidine degradation pathway. The sequence is that of Imidazolonepropionase from Vibrio parahaemolyticus serotype O3:K6 (strain RIMD 2210633).